A 209-amino-acid chain; its full sequence is MAKLYFYYAAMNAGKSTVLLQSSYNYRERGMQTLLFTPAIDTRYQYGTICSRIGLSEQAYAFNNTDNLYVLTQELQLQATKYSCVLIDEAQFLTREQVYQLTEITDQMSIPVLAYGLRTDFRGELFPGSQFLLAWADELIELKTICHCGRKATMNMRIDENGQAVVEGEQVLIGGNESYVATCRLHYKRGEAGKTFPGNKLFNKDTNTF.

Residues 9–16 and 88–91 each bind ATP; these read AAMNAGKS and DEAQ. Catalysis depends on glutamate 89, which acts as the Proton acceptor. Zn(2+)-binding residues include cysteine 146, cysteine 148, cysteine 183, and histidine 186.

Belongs to the thymidine kinase family. Homotetramer.

The protein resides in the cytoplasm. The enzyme catalyses thymidine + ATP = dTMP + ADP + H(+). The chain is Thymidine kinase from Legionella pneumophila (strain Lens).